A 600-amino-acid chain; its full sequence is Monooxygenase ptmN (600 aa).

This sequence belongs to the FMO family. FAD is required as a cofactor.

It participates in secondary metabolite biosynthesis. Its function is as follows. Monooxygenase; part of the gene cluster that mediates the biosynthesis of the indole diterpenes penitrems. The geranylgeranyl diphosphate (GGPP) synthase ptmG catalyzes the first step in penitrem biosynthesis via conversion of farnesyl pyrophosphate and isopentyl pyrophosphate into geranylgeranyl pyrophosphate (GGPP). Condensation of indole-3-glycerol phosphate with GGPP by the prenyl transferase ptmC then forms 3-geranylgeranylindole (3-GGI). Epoxidation by the FAD-dependent monooxygenase ptmM leads to a epoxidized-GGI that is substrate of the terpene cyclase ptmB for cyclization to yield paspaline. Paspaline is subsequently converted to 13-desoxypaxilline by the cytochrome P450 monooxygenase ptmP, the latter being then converted to paxilline by the cytochrome P450 monooxygenase ptmQ. Paxilline is converted to beta-paxitriol via C-10 ketoreduction by the short-chain dehydrogenase ptmH which can be monoprenylated at the C-20 by the indole diterpene prenyltransferase ptmD. A two-step elimination (acetylation and elimination) process performed by the O-acetyltransferase ptmV and ptmI leads to the production of the prenylated form of penijanthine. The FAD-linked oxidoreductase ptmO then converts the prenylated form of penijanthine into PC-M5 which is in turn transformed into PC-M4 by the aromatic dimethylallyltransferase ptmE. Five sequential oxidative transformations performed by the cytochrome P450 monooxygenases ptmK, ptmU, ptmL, ptmN and ptmJ yield the various penitrem compounds. PtmK, ptmU and ptmM are involved in the formation of the key bicyclic ring of penitrem C via the formation of the intermediates secopenitrem D and penitrem D. PtmL catalyzes the epoxidation of penitrem D and C to yield penitrem B and F, respectively. PtmJ catalyzes the last benzylic hydroxylation to convert penitrem B to prenitrem E and penitrem F to penitrem A. The chain is Monooxygenase ptmN from Penicillium ochrochloron.